Reading from the N-terminus, the 446-residue chain is tRNA modification GTPase MnmE (446 aa).

(6S)-5-formyl-5,6,7,8-tetrahydrofolate-binding residues include Arg-24, Glu-81, and Lys-120. The TrmE-type G domain occupies 216–368 (GLHAVLIGPP…LHTRLRELAL (153 aa)). K(+) is bound at residue Asn-226. GTP-binding positions include 226 to 231 (NAGKSS), 245 to 251 (TDVAGTT), and 270 to 273 (DTAG). Mg(2+) is bound at residue Ser-230. K(+)-binding residues include Thr-245, Val-247, and Thr-250. Residue Thr-251 participates in Mg(2+) binding. Lys-446 contributes to the (6S)-5-formyl-5,6,7,8-tetrahydrofolate binding site.

This sequence belongs to the TRAFAC class TrmE-Era-EngA-EngB-Septin-like GTPase superfamily. TrmE GTPase family. In terms of assembly, homodimer. Heterotetramer of two MnmE and two MnmG subunits. K(+) is required as a cofactor.

Its subcellular location is the cytoplasm. Functionally, exhibits a very high intrinsic GTPase hydrolysis rate. Involved in the addition of a carboxymethylaminomethyl (cmnm) group at the wobble position (U34) of certain tRNAs, forming tRNA-cmnm(5)s(2)U34. The protein is tRNA modification GTPase MnmE of Xanthomonas campestris pv. campestris (strain B100).